The following is a 95-amino-acid chain: DASH complex subunit DAD3 (95 aa).

It belongs to the DASH complex DAD3 family. As to quaternary structure, component of the DASH complex consisting of ASK1, DAD1, DAD2, DAD3, DAD4, DAM1, DUO1, HSK3, SPC19 and SPC34, with a stoichiometry of one copy of each subunit per complex. Multiple DASH complexes oligomerize to form a ring that encircles spindle microtubules and organizes the rod-like NDC80 complexes of the outer kinetochore. DASH complex oligomerization strengthens microtubule attachments. On cytoplasmic microtubules, DASH complexes appear to form patches instead of rings.

Its subcellular location is the chromosome. It is found in the centromere. It localises to the kinetochore. The protein resides in the cytoplasm. The protein localises to the cytoskeleton. Its subcellular location is the spindle. It is found in the nucleus. In terms of biological role, component of the DASH complex that connects microtubules with kinetochores and couples microtubule depolymerisation to chromosome movement; it is involved in retrieving kinetochores to the spindle poles before their re-orientation on the spindle in early mitosis and allows microtubule depolymerization to pull chromosomes apart and resist detachment during anaphase. Kinetochores, consisting of a centromere-associated inner segment and a microtubule-contacting outer segment, play a crucial role in chromosome segregation by mediating the physical connection between centromeric DNA and microtubules. Kinetochores also serve as an input point for the spindle assembly checkpoint, which delays anaphase until all chromosomes have bioriented on the mitotic spindle. The sequence is that of DASH complex subunit DAD3 from Chaetomium thermophilum (strain DSM 1495 / CBS 144.50 / IMI 039719) (Thermochaetoides thermophila).